We begin with the raw amino-acid sequence, 43 residues long: uncharacterized protein (43 aa).

Residues 1–37 are compositionally biased toward low complexity; sequence MIIKNNNNNNNNNNNNNNNNNNNNNNNNNNNNNNNNN. The disordered stretch occupies residues 1-43; sequence MIIKNNNNNNNNNNNNNNNNNNNNNNNNNNNNNNNNNIEIIIK.

This is an uncharacterized protein from Dictyostelium discoideum (Social amoeba).